Consider the following 94-residue polypeptide: MLKPLENRVVLRVKEEEEKSMGGIVLTSASQEKPQTAEVVAVGEGKTNHHGTLISPLVKVGDTVIFEKFAGTTVKMDGEEFLILKDSDLLAIVE.

The protein belongs to the GroES chaperonin family. As to quaternary structure, heptamer of 7 subunits arranged in a ring. Interacts with the chaperonin GroEL.

It is found in the cytoplasm. Functionally, together with the chaperonin GroEL, plays an essential role in assisting protein folding. The GroEL-GroES system forms a nano-cage that allows encapsulation of the non-native substrate proteins and provides a physical environment optimized to promote and accelerate protein folding. GroES binds to the apical surface of the GroEL ring, thereby capping the opening of the GroEL channel. The protein is Co-chaperonin GroES of Lactococcus lactis subsp. lactis (strain IL1403) (Streptococcus lactis).